Here is a 61-residue protein sequence, read N- to C-terminus: Japonicin-1CDYa (61 aa).

The signal sequence occupies residues 1-22; that stretch reads MFTLKKSLLLLFFLGVINVSLC. A propeptide spanning residues 23–45 is cleaved from the precursor; it reads EEERDADEEERRDDPEERDVEVE. Cysteines 55 and 61 form a disulfide.

It belongs to the frog skin active peptide (FSAP) family. Brevinin subfamily. Expressed by the skin glands.

It is found in the secreted. Antimicrobial peptide. Has low activity against the Gram-positive bacterium S.aureus (MIC&gt;100 uM) and the Gram-negative bacterium E.coli (MIC=25 uM). Lacks hemolytic activity against human erythrocytes. The polypeptide is Japonicin-1CDYa (Rana dybowskii (Dybovsky's frog)).